Consider the following 250-residue polypeptide: AA9 family lytic polysaccharide monooxygenase E (250 aa).

A signal peptide spans methionine 1 to glycine 21. Histidine 22 and histidine 107 together coordinate Cu(2+). 2 disulfide bridges follow: cysteine 77–cysteine 199 and cysteine 118–cysteine 122. N-linked (GlcNAc...) asparagine glycosylation is present at asparagine 159. O2 is bound by residues histidine 185 and glutamine 194. Position 196 (tyrosine 196) interacts with Cu(2+).

This sequence belongs to the polysaccharide monooxygenase AA9 family. It depends on Cu(2+) as a cofactor.

The protein resides in the secreted. It carries out the reaction [(1-&gt;4)-beta-D-glucosyl]n+m + reduced acceptor + O2 = 4-dehydro-beta-D-glucosyl-[(1-&gt;4)-beta-D-glucosyl]n-1 + [(1-&gt;4)-beta-D-glucosyl]m + acceptor + H2O.. In terms of biological role, lytic polysaccharide monooxygenase (LPMO) that depolymerizes crystalline and amorphous polysaccharides via the oxidation of scissile alpha- or beta-(1-4)-glycosidic bonds, yielding C1 or C4 oxidation products. Catalysis by LPMOs requires the reduction of the active-site copper from Cu(II) to Cu(I) by a reducing agent and H(2)O(2) or O(2) as a cosubstrate. The sequence is that of AA9 family lytic polysaccharide monooxygenase E from Aspergillus tamarii.